The primary structure comprises 155 residues: Myosin light chain alkali (155 aa).

EF-hand domains are found at residues 7 to 41 (REVE…LNLN) and 80 to 115 (GCYE…LGES).

Myosin is a hexamer of 2 heavy chains and 4 light chains. In terms of tissue distribution, indirect flight muscle isoform is found only in the indirect flight muscles. The larval and adult isoform is present in the larval and adult musculature.

This Drosophila melanogaster (Fruit fly) protein is Myosin light chain alkali (Mlc1).